A 285-amino-acid chain; its full sequence is RNA polymerase sigma factor RpoH (285 aa).

Residues 53-122 (LILSHLRFVI…IHEYVLRNWR (70 aa)) are sigma-70 factor domain-2. An Interaction with polymerase core subunit RpoC motif is present at residues 77–80 (DLIQ). A sigma-70 factor domain-4 region spans residues 229 to 281 (ALLRLDERSRNIIRARWLDKKEKNTLQKIANNYGISAERVRQLEKNAMKKLKI). The segment at residues 254–273 (LQKIANNYGISAERVRQLEK) is a DNA-binding region (H-T-H motif).

It belongs to the sigma-70 factor family. RpoH subfamily. Interacts with the RNA polymerase core enzyme.

The protein localises to the cytoplasm. Sigma factors are initiation factors that promote the attachment of RNA polymerase to specific initiation sites and are then released. This sigma factor is involved in regulation of expression of heat shock genes. The protein is RNA polymerase sigma factor RpoH of Buchnera aphidicola subsp. Schizaphis graminum (strain Sg).